Consider the following 224-residue polypeptide: DNA repair and recombination protein RadB (224 aa).

It belongs to the eukaryotic RecA-like protein family. RadB subfamily.

Its function is as follows. Involved in DNA repair and in homologous recombination. May regulate the cleavage reactions of the branch-structured DNA. Has a very weak ATPase activity that is not stimulated by DNA. Binds DNA but does not promote DNA strands exchange. This is DNA repair and recombination protein RadB from Thermococcus onnurineus (strain NA1).